We begin with the raw amino-acid sequence, 468 residues long: ATP synthase subunit beta (468 aa).

155–162 is an ATP binding site; sequence GGAGVGKT.

This sequence belongs to the ATPase alpha/beta chains family. In terms of assembly, F-type ATPases have 2 components, CF(1) - the catalytic core - and CF(0) - the membrane proton channel. CF(1) has five subunits: alpha(3), beta(3), gamma(1), delta(1), epsilon(1). CF(0) has three main subunits: a(1), b(2) and c(9-12). The alpha and beta chains form an alternating ring which encloses part of the gamma chain. CF(1) is attached to CF(0) by a central stalk formed by the gamma and epsilon chains, while a peripheral stalk is formed by the delta and b chains.

Its subcellular location is the cell membrane. It catalyses the reaction ATP + H2O + 4 H(+)(in) = ADP + phosphate + 5 H(+)(out). Produces ATP from ADP in the presence of a proton gradient across the membrane. The catalytic sites are hosted primarily by the beta subunits. In Streptococcus mutans serotype c (strain ATCC 700610 / UA159), this protein is ATP synthase subunit beta.